The chain runs to 303 residues: Tumor necrosis factor receptor type 1-associated DEATH domain protein (303 aa).

The Nuclear export signal signature appears at 141–157 (QKDDELAEIDERLKSIK). The Death domain occupies 208-298 (TSAHIQHFAK…SIALDLLSLN (91 aa)). The short motif at 224–237 (KPVGRSLGKTCRAL) is the Nuclear localization signal element.

In terms of assembly, heterodimer with tnfrsf1a.

It is found in the nucleus. The protein localises to the cytoplasm. Its subcellular location is the cytoskeleton. Adapter molecule for tnfrsf1a that specifically associates with the cytoplasmic domain of activated tnfrsf1a mediating its interaction with fadd. The polypeptide is Tumor necrosis factor receptor type 1-associated DEATH domain protein (Xenopus laevis (African clawed frog)).